A 185-amino-acid polypeptide reads, in one-letter code: YGAAIENGPGTQEQIWHRDQPDYALLKAGPGTAEAMLNFFTALTDFTPDTGMTQYIWGSHKRVELGEPDAEHPVVFTKLKAGDTAVLSGKIVHRGSANATPDVFRRALALMIIPAIMTPFDATCHLSRHMVETMTPLAQKMVGRRSVVIPPPHTVGAALGIWCLNMREVGEQMGLKSNQPDKEEE.

Positions 17, 19, and 93 each coordinate Fe cation.

The protein belongs to the PhyH family. As to quaternary structure, homodimer. Fe cation is required as a cofactor.

The protein operates within alkaloid biosynthesis; ergot alkaloid biosynthesis. In terms of biological role, dioxygenase; part of the gene cluster that mediates the biosynthesis of fungal ergot alkaloid ergovaline, the predominant ergopeptine product in E.festucae var. lolii. DmaW catalyzes the first step of ergot alkaloid biosynthesis by condensing dimethylallyl diphosphate (DMAP) and tryptophan to form 4-dimethylallyl-L-tryptophan. The second step is catalyzed by the methyltransferase easF that methylates 4-dimethylallyl-L-tryptophan in the presence of S-adenosyl-L-methionine, resulting in the formation of 4-dimethylallyl-L-abrine. The catalase easC and the FAD-dependent oxidoreductase easE then transform 4-dimethylallyl-L-abrine to chanoclavine-I which is further oxidized by easD in the presence of NAD(+), resulting in the formation of chanoclavine-I aldehyde. Agroclavine dehydrogenase easG then mediates the conversion of chanoclavine-I aldehyde to agroclavine via a non-enzymatic adduct reaction: the substrate is an iminium intermediate that is formed spontaneously from chanoclavine-I aldehyde in the presence of glutathione. The presence of easA is not required to complete this reaction. Further conversion of agroclavine to paspalic acid is a two-step process involving oxidation of agroclavine to elymoclavine and of elymoclavine to paspalic acid, the second step being performed by the elymoclavine oxidase cloA. Paspalic acid is then further converted to D-lysergic acid. Ergovaline is assembled from D-lysergic acid and three different amino acids by the D-lysergyl-peptide-synthetase composed of a monomudular (lpsB) and a trimodular (lpsA) nonribosomal peptide synthetase subunit. This is Dioxygenase easH from Epichloe festucae var. lolii (Neotyphodium lolii).